A 277-amino-acid polypeptide reads, in one-letter code: Glutamate racemase (277 aa).

Substrate contacts are provided by residues 13-14 and 45-46; these read DS and YG. Catalysis depends on Cys77, which acts as the Proton donor/acceptor. 78–79 contacts substrate; the sequence is NT. The active-site Proton donor/acceptor is the Cys192. 193–194 contacts substrate; the sequence is TH.

This sequence belongs to the aspartate/glutamate racemases family.

It catalyses the reaction L-glutamate = D-glutamate. Its pathway is cell wall biogenesis; peptidoglycan biosynthesis. Its function is as follows. Provides the (R)-glutamate required for cell wall biosynthesis. This Rhizobium meliloti (strain 1021) (Ensifer meliloti) protein is Glutamate racemase.